Reading from the N-terminus, the 380-residue chain is Gibberellin 20 oxidase 3 (380 aa).

In terms of domain architecture, Fe2OG dioxygenase spans 221-321 (DSDSIFRLNY…RKTFAFFLCP (101 aa)). Fe cation contacts are provided by His246, Asp248, and His302. The active site involves Arg312.

Belongs to the iron/ascorbate-dependent oxidoreductase family. GA20OX subfamily. Fe(2+) is required as a cofactor. L-ascorbate serves as cofactor. As to expression, expressed at high level in developing siliques. Detected in seeds, roots, leaves and inflorescences. In seeds, specifically detected at the outer layer of the outer integument.

It catalyses the reaction gibberellin A12 + 2 2-oxoglutarate + 3 O2 + H(+) = gibberellin A9 + 2 succinate + 3 CO2 + 2 H2O. It carries out the reaction gibberellin A12 + 3 2-oxoglutarate + 3 O2 = gibberellin A25 + 3 succinate + 3 CO2 + H2O + H(+). The catalysed reaction is gibberellin A53 + 2 2-oxoglutarate + 3 O2 + H(+) = gibberellin A20 + 2 succinate + 3 CO2 + 2 H2O. Its pathway is plant hormone biosynthesis; gibberellin biosynthesis. Its function is as follows. Key oxidase enzyme in the biosynthesis of gibberellin that catalyzes the conversion of GA12 and GA53 to GA9 and GA20 respectively, via a three-step oxidation at C-20 of the GA skeleton, and GA25 is also formed as a minor product. GA53 is less effectively oxidized than GA12. This chain is Gibberellin 20 oxidase 3 (GA20OX3), found in Arabidopsis thaliana (Mouse-ear cress).